A 587-amino-acid chain; its full sequence is DELLA protein RGA (587 aa).

Residues 1–26 (MKRDHHQFQGRLSNHGTSSSSSSISK) form a disordered region. The short motif at 44–48 (DELLA) is the DELLA motif element. Positions 66-70 (LEQLE) match the LEXLE motif motif. The VHYNP motif motif lies at 89–93 (VHYNP). Residues 152-181 (IDSSSSSNNQNKRLKSCSSPDSMVTSTSTG) are disordered. The segment covering 153 to 175 (DSSSSSNNQNKRLKSCSSPDSMV) has biased composition (polar residues). The region spanning 212 to 581 (VDSQENGVRL…RPLITTSAWK (370 aa)) is the GRAS domain. The interval 219–273 (VRLVHALMACAEAIQQNNLTLAEALVKQIGCLAVSQAGAMRKVATYFAEALARRI) is leucine repeat I (LRI). Positions 292–357 (QMHFYETCPY…GGPPTFRLTG (66 aa)) are VHIID. The short motif at 323 to 327 (VHVID) is the VHIID element. A leucine repeat II (LRII) region spans residues 371-403 (EVGCKLAQLAEAIHVEFEYRGFVANSLADLDAS). The segment at 415–502 (VAVNSVFELH…EVYLGKQICN (88 aa)) is PFYRE. Positions 423–427 (LHKLL) match the LXXLL motif motif. An SAW region spans residues 505–581 (ACEGPDRVER…RPLITTSAWK (77 aa)).

It belongs to the GRAS family. DELLA subfamily. As to quaternary structure, interacts directly with the GID2/SLY1 component of the SCF(GID2) complex. Interacts (via N-terminus) with GID1A, GID1B and GID1B (via N-terminus). Binds to bHLH transcription factors such as MYC2, PIF1, PIF4, PIF6 and SPT. Interacts with the BOI proteins BOI, BRG1, BRG2 and BRG3. Interacts with NFYC9. Interacts with TOPP4. Interacts with FLZ5. Binds to zinc finger proteins MGP/IDD3, IDD4, IDD5, BIB/IDD9 and JKD/IDD10 in the nucleus. Binds to and coactivates GAF1/IDD2 and ENY/IDD1. Binds to PDF2 and ATML1. Phosphorylated. Phosphorylation may increase the interaction with GID2. Post-translationally, gibberellin (GA) induces dephosphorylation of RGA by TOPP4 and subsequent degradation by the proteasomal pathway. In terms of processing, ubiquitinated. Upon GA application it is ubiquitinated by the SCF(GID2) complex, leading to its subsequent degradation. O-fucosylated by SPY. O-fucosylation enhances RGA activity by promoting RGA binding to key transcription factors in brassinosteroid and light signaling pathways. In terms of tissue distribution, ubiquitously expressed. Expressed in roots, rosette leaves, bolting and mature stems, young and mature siliques, flower buds and influorescences.

It is found in the nucleus. Its function is as follows. Probable transcriptional regulator that acts as a repressor of the gibberellin (GA) signaling pathway. Probably acts by participating in large multiprotein complexes that repress transcription of GA-inducible genes. Positively regulates XERICO expression in seeds. Upon GA application, it is degraded by the proteasome, allowing the GA signaling pathway. Compared to other DELLA proteins, it is the most sensitive to GA application. No effect of the BOI proteins on its stability. Its activity is probably regulated by other phytohormones such as auxin and ethylene, attenuation of auxin transport delaying its GA-induced degradation. Involved in the regulation of seed dormancy and germination, including glucose-induced delay of seed germination. The chain is DELLA protein RGA from Arabidopsis thaliana (Mouse-ear cress).